The sequence spans 396 residues: Na(+)/H(+) antiporter NhaA (396 aa).

A run of 11 helical transmembrane segments spans residues 17 to 37, 59 to 79, 97 to 117, 127 to 147, 156 to 176, 181 to 201, 206 to 226, 260 to 280, 292 to 312, 333 to 353, and 368 to 388; these read FSGL…NTNF, FSLT…EIGI, ILPG…YNFI, GWAI…KILG, IFLL…IAFF, IDQY…SINY, CIYI…LSGI, SLSF…NSGI, LLPF…VFLF, IAGI…ISNL, and FSIL…LYFL.

It belongs to the NhaA Na(+)/H(+) (TC 2.A.33) antiporter family.

The protein localises to the cell membrane. It carries out the reaction Na(+)(in) + 2 H(+)(out) = Na(+)(out) + 2 H(+)(in). In terms of biological role, na(+)/H(+) antiporter that extrudes sodium in exchange for external protons. The polypeptide is Na(+)/H(+) antiporter NhaA (Wigglesworthia glossinidia brevipalpis).